The chain runs to 299 residues: Ribosomal RNA small subunit methyltransferase H (299 aa).

Residues 36-38 (GGH), D55, D103, and Q110 each bind S-adenosyl-L-methionine. Basic and acidic residues-rich tracts occupy residues 268 to 282 (KPVR…ENPR) and 289 to 299 (RAAERIEKGGD). Positions 268–299 (KPVRPSEEEIRENPRARSGRLRAAERIEKGGD) are disordered.

It belongs to the methyltransferase superfamily. RsmH family.

The protein localises to the cytoplasm. It carries out the reaction cytidine(1402) in 16S rRNA + S-adenosyl-L-methionine = N(4)-methylcytidine(1402) in 16S rRNA + S-adenosyl-L-homocysteine + H(+). Functionally, specifically methylates the N4 position of cytidine in position 1402 (C1402) of 16S rRNA. This is Ribosomal RNA small subunit methyltransferase H from Thermotoga petrophila (strain ATCC BAA-488 / DSM 13995 / JCM 10881 / RKU-1).